We begin with the raw amino-acid sequence, 385 residues long: Tryptophan--tRNA ligase (385 aa).

The 'HIGH' region signature appears at 82–90; it reads PSGPMHIGH. Positions 253–257 match the 'KMSKS' region motif; it reads KMSAS.

It belongs to the class-I aminoacyl-tRNA synthetase family.

It is found in the cytoplasm. It catalyses the reaction tRNA(Trp) + L-tryptophan + ATP = L-tryptophyl-tRNA(Trp) + AMP + diphosphate + H(+). The chain is Tryptophan--tRNA ligase from Pyrococcus abyssi (strain GE5 / Orsay).